A 382-amino-acid polypeptide reads, in one-letter code: Lipid-A-disaccharide synthase (382 aa).

This sequence belongs to the LpxB family.

The enzyme catalyses a lipid X + a UDP-2-N,3-O-bis[(3R)-3-hydroxyacyl]-alpha-D-glucosamine = a lipid A disaccharide + UDP + H(+). The protein operates within bacterial outer membrane biogenesis; LPS lipid A biosynthesis. Condensation of UDP-2,3-diacylglucosamine and 2,3-diacylglucosamine-1-phosphate to form lipid A disaccharide, a precursor of lipid A, a phosphorylated glycolipid that anchors the lipopolysaccharide to the outer membrane of the cell. This is Lipid-A-disaccharide synthase from Alteromonas mediterranea (strain DSM 17117 / CIP 110805 / LMG 28347 / Deep ecotype).